The chain runs to 164 residues: UPF0304 protein PM1500 (164 aa).

The protein belongs to the UPF0304 family.

The protein is UPF0304 protein PM1500 of Pasteurella multocida (strain Pm70).